Here is a 715-residue protein sequence, read N- to C-terminus: Probable serine/threonine-protein kinase mkcE (715 aa).

Disordered stretches follow at residues 1–125 (MQKI…SQHQ), 228–330 (QLQQ…TTTT), and 366–385 (GVDNLSSTTTSLSQNPPIQP). Residues 42–53 (YDGGGSGSGSGG) show a composition bias toward gly residues. Low complexity-rich tracts occupy residues 54–70 (SSSNSSGSSRKINTGGN) and 80–125 (SPSN…SQHQ). Residues 207–241 (TGKKNFQQQQLQQLQQQQQQQQLQQQQHQQHNHQI) adopt a coiled-coil conformation. Low complexity predominate over residues 367–378 (VDNLSSTTTSLS). One can recognise a Protein kinase domain in the interval 427–683 (RIGENAEVKG…PTQLLQHPFI (257 aa)). ATP contacts are provided by residues 433 to 441 (EVKGAFGTV) and Lys459. The active-site Proton acceptor is the Asp550.

It belongs to the protein kinase superfamily. STE Ser/Thr protein kinase family. STE20 subfamily. Requires Mg(2+) as cofactor.

The catalysed reaction is L-seryl-[protein] + ATP = O-phospho-L-seryl-[protein] + ADP + H(+). The enzyme catalyses L-threonyl-[protein] + ATP = O-phospho-L-threonyl-[protein] + ADP + H(+). The protein is Probable serine/threonine-protein kinase mkcE of Dictyostelium discoideum (Social amoeba).